We begin with the raw amino-acid sequence, 195 residues long: Recombination protein RecR (195 aa).

Residues 53-68 (CTICHNLDTISPCSIC) form a C4-type zinc finger. A Toprim domain is found at 76–171 (SIICVVEELG…KVTRLACGIP (96 aa)).

The protein belongs to the RecR family.

Its function is as follows. May play a role in DNA repair. It seems to be involved in an RecBC-independent recombinational process of DNA repair. It may act with RecF and RecO. The chain is Recombination protein RecR from Anaplasma marginale (strain St. Maries).